A 162-amino-acid chain; its full sequence is Thy-1 membrane glycoprotein (162 aa).

The N-terminal stretch at 1-19 (MNPAISVALLLSVLQVSRG) is a signal peptide. Q20 bears the Pyrrolidone carboxylic acid mark. The Ig-like V-type domain occupies 20-127 (QKVTSLTACL…NKSISVYRDK (108 aa)). 2 cysteine pairs are disulfide-bonded: C28/C131 and C38/C105. 3 N-linked (GlcNAc...) asparagine glycosylation sites follow: N42, N94, and N118. C131 is lipidated: GPI-anchor amidated cysteine; alternate. A propeptide spans 132–162 (GGISLLVQNTSWMLLLLLSLSLLQALDFISL) (removed in mature form).

The protein localises to the cell membrane. In terms of biological role, may play a role in cell-cell or cell-ligand interactions during synaptogenesis and other events in the brain. The polypeptide is Thy-1 membrane glycoprotein (Thy1) (Mus musculus (Mouse)).